The following is a 199-amino-acid chain: FMN-dependent NADH:quinone oxidoreductase (199 aa).

FMN is bound by residues S10, 16-18 (SVS), and 96-99 (MYNF).

This sequence belongs to the azoreductase type 1 family. As to quaternary structure, homodimer. Requires FMN as cofactor.

The enzyme catalyses 2 a quinone + NADH + H(+) = 2 a 1,4-benzosemiquinone + NAD(+). It catalyses the reaction N,N-dimethyl-1,4-phenylenediamine + anthranilate + 2 NAD(+) = 2-(4-dimethylaminophenyl)diazenylbenzoate + 2 NADH + 2 H(+). Functionally, quinone reductase that provides resistance to thiol-specific stress caused by electrophilic quinones. Its function is as follows. Also exhibits azoreductase activity. Catalyzes the reductive cleavage of the azo bond in aromatic azo compounds to the corresponding amines. The protein is FMN-dependent NADH:quinone oxidoreductase of Azotobacter vinelandii (strain DJ / ATCC BAA-1303).